Consider the following 105-residue polypeptide: ATP-dependent Clp protease adapter protein ClpS (105 aa).

The protein belongs to the ClpS family. Binds to the N-terminal domain of the chaperone ClpA.

Its function is as follows. Involved in the modulation of the specificity of the ClpAP-mediated ATP-dependent protein degradation. The polypeptide is ATP-dependent Clp protease adapter protein ClpS (Streptomyces avermitilis (strain ATCC 31267 / DSM 46492 / JCM 5070 / NBRC 14893 / NCIMB 12804 / NRRL 8165 / MA-4680)).